Reading from the N-terminus, the 123-residue chain is Protein LLP homolog (123 aa).

Over residues 1 to 21 (MAKSIRSKWKRKMRAEKRKKN) the composition is skewed to basic residues. 2 disordered regions span residues 1–23 (MAKSIRSKWKRKMRAEKRKKNAP) and 55–123 (KINE…KLAW). Residues 70–89 (DSSKMDMELKRNKKNLRDQH) show a composition bias toward basic and acidic residues. Basic residues predominate over residues 100 to 123 (QQKKLKSQCGKKKGKSKQAKKLAW).

It belongs to the learning-associated protein family.

It is found in the nucleus. It localises to the nucleolus. The protein localises to the chromosome. Its function is as follows. Regulates dendritic and spine growth and synaptic transmission. This is Protein LLP homolog (llph) from Xenopus tropicalis (Western clawed frog).